A 720-amino-acid polypeptide reads, in one-letter code: Methionine--tRNA ligase (720 aa).

The short motif at 27-37 is the 'HIGH' region element; it reads PYANGQIHIGH. The Zn(2+) site is built by Cys-158, Cys-161, Cys-171, and Cys-174. Positions 348–352 match the 'KMSKS' region motif; it reads KMSKS. Lys-351 contributes to the ATP binding site. In terms of domain architecture, tRNA-binding spans 614-720; sequence DFAKVDLRIA…SGAKPGMRVK (107 aa).

Belongs to the class-I aminoacyl-tRNA synthetase family. MetG type 1 subfamily. As to quaternary structure, homodimer. It depends on Zn(2+) as a cofactor.

The protein resides in the cytoplasm. It carries out the reaction tRNA(Met) + L-methionine + ATP = L-methionyl-tRNA(Met) + AMP + diphosphate. In terms of biological role, is required not only for elongation of protein synthesis but also for the initiation of all mRNA translation through initiator tRNA(fMet) aminoacylation. This is Methionine--tRNA ligase from Burkholderia ambifaria (strain ATCC BAA-244 / DSM 16087 / CCUG 44356 / LMG 19182 / AMMD) (Burkholderia cepacia (strain AMMD)).